The primary structure comprises 102 residues: Large ribosomal subunit protein uL23 (102 aa).

Belongs to the universal ribosomal protein uL23 family. As to quaternary structure, part of the 50S ribosomal subunit. Contacts protein L29, and trigger factor when it is bound to the ribosome.

Functionally, one of the early assembly proteins it binds 23S rRNA. One of the proteins that surrounds the polypeptide exit tunnel on the outside of the ribosome. Forms the main docking site for trigger factor binding to the ribosome. This chain is Large ribosomal subunit protein uL23, found in Cutibacterium acnes (strain DSM 16379 / KPA171202) (Propionibacterium acnes).